A 350-amino-acid polypeptide reads, in one-letter code: GTPase Obg (350 aa).

The region spanning 1–159 is the Obg domain; the sequence is MKLVDEAEIL…RLLKLELKLL (159 aa). The OBG-type G domain occupies 160–337; that stretch reads ADVGLLGFPN…IMKDVMAFFD (178 aa). Residues 166 to 173, 191 to 195, 213 to 216, 287 to 290, and 318 to 320 contribute to the GTP site; these read GFPNAGKS, FTTLY, DVPG, NKAD, and SAL. Residues Ser-173 and Thr-193 each contribute to the Mg(2+) site.

It belongs to the TRAFAC class OBG-HflX-like GTPase superfamily. OBG GTPase family. Monomer. It depends on Mg(2+) as a cofactor.

Its subcellular location is the cytoplasm. In terms of biological role, an essential GTPase which binds GTP, GDP and possibly (p)ppGpp with moderate affinity, with high nucleotide exchange rates and a fairly low GTP hydrolysis rate. Plays a role in control of the cell cycle, stress response, ribosome biogenesis and in those bacteria that undergo differentiation, in morphogenesis control. The protein is GTPase Obg of Xanthomonas campestris pv. campestris (strain 8004).